We begin with the raw amino-acid sequence, 100 residues long: Small ribosomal subunit protein uS14 (100 aa).

Belongs to the universal ribosomal protein uS14 family. In terms of assembly, part of the 30S ribosomal subunit. Contacts proteins S3 and S10.

Functionally, binds 16S rRNA, required for the assembly of 30S particles and may also be responsible for determining the conformation of the 16S rRNA at the A site. This chain is Small ribosomal subunit protein uS14, found in Prochlorococcus marinus (strain MIT 9301).